The chain runs to 355 residues: Isopentenyl-diphosphate delta-isomerase (355 aa).

Substrate is bound at residue 6–7; it reads RK. FMN contacts are provided by residues 62–64, serine 93, and asparagine 122; that span reads AMT. Glutamine 152 lines the substrate pocket. Glutamate 153 contacts Mg(2+). FMN contacts are provided by residues lysine 184, threonine 214, 258-259, and 280-281; these read GG and AG.

The protein belongs to the IPP isomerase type 2 family. In terms of assembly, homooctamer. Dimer of tetramers. It depends on FMN as a cofactor. The cofactor is NADPH. Mg(2+) is required as a cofactor.

The protein resides in the cytoplasm. It catalyses the reaction isopentenyl diphosphate = dimethylallyl diphosphate. In terms of biological role, involved in the biosynthesis of isoprenoids. Catalyzes the 1,3-allylic rearrangement of the homoallylic substrate isopentenyl (IPP) to its allylic isomer, dimethylallyl diphosphate (DMAPP). This Bacillus pumilus (strain SAFR-032) protein is Isopentenyl-diphosphate delta-isomerase.